The following is a 313-amino-acid chain: uncharacterized protein (313 aa).

Residues 2-57 form the HTH deoR-type domain; the sequence is KLERLLAMVVLLISKKQVQAAELAELFEVSVRTIYRDIETINRAGIPIVTSQGSGG. A DNA-binding region (H-T-H motif) is located at residues 19-38; it reads VQAAELAELFEVSVRTIYRD. A WYL domain is found at 131–210; the sequence is HTEDQKTLRE…KDLAILHQTF (80 aa).

Its subcellular location is the cytoplasm. This is an uncharacterized protein from Bacillus subtilis (strain 168).